The chain runs to 113 residues: Large ribosomal subunit protein P1z (113 aa).

Residues 87–113 are disordered; the sequence is AAAPAKEEKKDEPAEESDGDLGFGLFD. At serine 103 the chain carries Phosphoserine.

Belongs to the eukaryotic ribosomal protein P1/P2 family. In terms of assembly, P1 and P2 exist as dimers at the large ribosomal subunit.

Plays an important role in the elongation step of protein synthesis. This is Large ribosomal subunit protein P1z (RPP1B) from Arabidopsis thaliana (Mouse-ear cress).